Reading from the N-terminus, the 798-residue chain is Gelsolin (798 aa).

The first 28 residues, Met-1–Ala-28, serve as a signal peptide directing secretion. The actin-severing stretch occupies residues Arg-57–Phe-181. One copy of the Gelsolin-like 1 repeat lies at Glu-78–Gly-131. At Tyr-90 the chain carries Phosphotyrosine; by SRC. The tract at residues Asp-128–Gly-131 is actin-actin interfilament contact point. Residues Lys-167–Gln-174 and Arg-193–Arg-201 contribute to the a 1,2-diacyl-sn-glycero-3-phospho-(1D-myo-inositol-4,5-bisphosphate) site. Gelsolin-like repeat units follow at residues Val-203–Leu-243, Leu-322–Thr-365, Ile-474–Lys-524, and Val-583–Gln-625. The actin-binding, Ca-sensitive stretch occupies residues Met-451 to Ile-792. Residue Asp-599 coordinates Ca(2+). Phosphotyrosine; by SRC is present on Tyr-612. Residue Glu-623 participates in Ca(2+) binding. Tyr-662 bears the Phosphotyrosine; by SRC mark. The Gelsolin-like 6 repeat unit spans residues Leu-689–Gly-730. Ca(2+) contacts are provided by Asp-705, Asp-706, and Glu-728.

The protein belongs to the villin/gelsolin family. As to quaternary structure, binds to actin and to fibronectin. Isoform 1 and isoform 2 are ubiquitously expressed in early embryo. Isoform 1 is expressed in the fat body, and is abundant in hemolymph. Isoform 2 is expressed in parts of the gut.

It is found in the cytoplasm. It localises to the cytoskeleton. The protein localises to the secreted. In terms of biological role, calcium-regulated, actin-modulating protein that binds to the plus (or barbed) ends of actin monomers or filaments, preventing monomer exchange (end-blocking or capping). It can promote the assembly of monomers into filaments (nucleation) as well as sever filaments already formed. The protein is Gelsolin (Gel) of Drosophila melanogaster (Fruit fly).